Reading from the N-terminus, the 722-residue chain is Probable glycerol-3-phosphate dehydrogenase, mitochondrial (722 aa).

Residues 1-43 (MSWVRFTKTGVAVVATSAAAVLALDMTNERRFQRQVKDHFRTV) constitute a mitochondrion transit peptide. An FAD-binding site is contributed by 76–104 (DVLIIGGGATGAGVALDAQTRGLKTALVE). 2 consecutive EF-hand domains span residues 624 to 659 (EEMQ…HNQK) and 660 to 695 (IDER…LKGG). D673, N675, N677, E679, and E684 together coordinate Ca(2+).

The protein belongs to the FAD-dependent glycerol-3-phosphate dehydrogenase family. It depends on FAD as a cofactor.

It localises to the mitochondrion. It carries out the reaction a quinone + sn-glycerol 3-phosphate = dihydroxyacetone phosphate + a quinol. It functions in the pathway polyol metabolism; glycerol degradation via glycerol kinase pathway; glycerone phosphate from sn-glycerol 3-phosphate (anaerobic route): step 1/1. With respect to regulation, calcium-binding enhances the activity of the enzyme. The chain is Probable glycerol-3-phosphate dehydrogenase, mitochondrial from Caenorhabditis elegans.